A 217-amino-acid polypeptide reads, in one-letter code: Membrane-associated progesterone receptor component 2 (217 aa).

Ser-15 carries an O-linked (Xyl...) (chondroitin sulfate) serine glycan. The helical transmembrane segment at 40 to 62 (ALLATGGEMLLNVALVALVLLGA) threads the bilayer. Residues Ser-84, Ser-98, and Ser-202 each carry the phosphoserine modification. The region spanning 96–195 (DFSLEQLRQY…EKYDYVGRLL (100 aa)) is the Cytochrome b5 heme-binding domain. Residues 196 to 217 (KPGEEPSEYTDEEDTKDHSKQD) form a disordered region. Residues 200–209 (EPSEYTDEED) are compositionally biased toward acidic residues. The residue at position 204 (Tyr-204) is a Phosphotyrosine. The residue at position 205 (Thr-205) is a Phosphothreonine.

It belongs to the cytochrome b5 family. MAPR subfamily. In terms of assembly, interacts with PGRMC1. Interacts with AAAS. As to expression, expressed in brown adipose tissue, white adipose tissue, liver, heart, skeletal muscle, brain and adrenal gland.

It localises to the membrane. It is found in the nucleus envelope. The protein localises to the endoplasmic reticulum. The protein resides in the secreted. Required for the maintenance of uterine histoarchitecture and normal female reproductive lifespan. May serve as a universal non-classical progesterone receptor in the uterus. Intracellular heme chaperone required for delivery of labile, or signaling heme, to the nucleus. Plays a role in adipocyte function and systemic glucose homeostasis. In brown fat, which has a high demand for heme, delivery of labile heme in the nucleus regulates the activity of heme-responsive transcriptional repressors such as NR1D1 and BACH1. The chain is Membrane-associated progesterone receptor component 2 from Mus musculus (Mouse).